The chain runs to 400 residues: N(alpha)-acyl-glutamine aminoacylase (400 aa).

It belongs to the peptidase M20 family. The cofactor is Zn(2+).

It catalyses the reaction an N(2)-acyl-L-glutamine + H2O = a carboxylate + L-glutamine. The enzyme catalyses N(2)-[(2E)-3-methylhex-2-enoyl]-L-glutaminate + H2O = (2E)-3-methylhex-2-enoate + L-glutamine. The catalysed reaction is N(2)-(3-hydroxy-3-methylhexanoyl)-L-glutaminate + H2O = 3-hydroxy-3-methylhexanoate + L-glutamine. Its activity is regulated as follows. Partial loss of activity with the combination Mn(2+) and chelating agents. Activity is lost in presence of 0.5 mM dithiothreitol. In terms of biological role, hydrolyzes odorless N-alpha-acyl-L-glutamine conjugates of short- and medium-chain fatty acids, releasing human axillary malodor compounds. The enzyme is highly specific for the glutamine residue but has a low specificity for the acyl part of the substrate. The two most common products are 3-methyl-2-hexenoic acid (3M2H) and 3-hydroxy-3-methyl-hexanoic acid (HMHA), which are produced from the odorless precursors N-alpha-3-methyl-2-hexenoyl-L-glutamine (3M2H-Gln) and N-alpha-3-hydroxy-3-methylhexanoyl-L-glutamine (HMHA-Gln). In addition, over 28 different carboxylic acids contributing to human body odor are released by this enzyme from odorless axilla secretions, including several aliphatic 3-hydroxy acids with 4-Me branches, 3,4-unsaturated, 4-Et-branched aliphatic acids, and a variety of degradation products of amino acids. This Corynebacterium striatum protein is N(alpha)-acyl-glutamine aminoacylase.